The sequence spans 99 residues: Large ribosomal subunit protein bL28 (99 aa).

Belongs to the bacterial ribosomal protein bL28 family.

The sequence is that of Large ribosomal subunit protein bL28 from Rhizobium etli (strain CIAT 652).